Here is a 313-residue protein sequence, read N- to C-terminus: NAD-capped RNA hydrolase NudC (313 aa).

Arg-111 is a binding site for substrate. Residues Pro-168–Leu-293 enclose the Nudix hydrolase domain. A divalent metal cation-binding residues include Ala-202, Glu-218, and Glu-222. The short motif at Gly-203–Gly-224 is the Nudix box element. A substrate-binding site is contributed by Gln-236–Ser-243. A divalent metal cation is bound at residue Glu-264.

It belongs to the Nudix hydrolase family. NudC subfamily. In terms of assembly, homodimer. Mg(2+) serves as cofactor. It depends on Mn(2+) as a cofactor.

It catalyses the reaction a 5'-end NAD(+)-phospho-ribonucleoside in mRNA + H2O = a 5'-end phospho-adenosine-phospho-ribonucleoside in mRNA + beta-nicotinamide D-ribonucleotide + 2 H(+). The catalysed reaction is NAD(+) + H2O = beta-nicotinamide D-ribonucleotide + AMP + 2 H(+). It carries out the reaction NADH + H2O = reduced beta-nicotinamide D-ribonucleotide + AMP + 2 H(+). MRNA decapping enzyme that specifically removes the nicotinamide adenine dinucleotide (NAD) cap from a subset of mRNAs by hydrolyzing the diphosphate linkage to produce nicotinamide mononucleotide (NMN) and 5' monophosphate mRNA. The NAD-cap is present at the 5'-end of some mRNAs and stabilizes RNA against 5'-processing. Has preference for mRNAs with a 5'-end purine. Catalyzes the hydrolysis of a broad range of dinucleotide pyrophosphates. The sequence is that of NAD-capped RNA hydrolase NudC from Mycobacterium bovis (strain ATCC BAA-935 / AF2122/97).